The following is a 433-amino-acid chain: uncharacterized protein (433 aa).

The protein localises to the virion. This is an uncharacterized protein from Acanthamoeba polyphaga (Amoeba).